The primary structure comprises 38 residues: Histatin-1 (38 aa).

Positions 1-38 are disordered; the sequence is DSHEERHHGRHGHHKYGRKFHEKHHSHRGYRSNYLYDN. Ser-2 carries the phosphoserine modification. The segment covering 8–30 has biased composition (basic residues); it reads HGRHGHHKYGRKFHEKHHSHRGY.

It belongs to the histatin/statherin family.

The protein resides in the secreted. Functionally, histatins (Hsts) are cationic and histidine-rich secreted peptides mainly synthesized by saliva glands of humans and higher primates. Hsts are considered to be major precursors of the protective proteinaceous structure on tooth surfaces (enamel pellicle). This Macaca fascicularis (Crab-eating macaque) protein is Histatin-1 (HTN1).